A 116-amino-acid chain; its full sequence is Nucleoid-associated protein SACE_0254 (116 aa).

Positions 90–116 (LQQEKMGPVTGALGGGQGLGGLGLPGL) are disordered. The span at 101-116 (ALGGGQGLGGLGLPGL) shows a compositional bias: gly residues.

This sequence belongs to the YbaB/EbfC family. As to quaternary structure, homodimer.

The protein localises to the cytoplasm. The protein resides in the nucleoid. Binds to DNA and alters its conformation. May be involved in regulation of gene expression, nucleoid organization and DNA protection. The chain is Nucleoid-associated protein SACE_0254 from Saccharopolyspora erythraea (strain ATCC 11635 / DSM 40517 / JCM 4748 / NBRC 13426 / NCIMB 8594 / NRRL 2338).